Consider the following 515-residue polypeptide: ATP synthase subunit alpha (515 aa).

An ATP-binding site is contributed by 171–178; sequence GDRQTGKT.

The protein belongs to the ATPase alpha/beta chains family. F-type ATPases have 2 components, CF(1) - the catalytic core - and CF(0) - the membrane proton channel. CF(1) has five subunits: alpha(3), beta(3), gamma(1), delta(1), epsilon(1). CF(0) has three main subunits: a(1), b(2) and c(9-12). The alpha and beta chains form an alternating ring which encloses part of the gamma chain. CF(1) is attached to CF(0) by a central stalk formed by the gamma and epsilon chains, while a peripheral stalk is formed by the delta and b chains.

The protein localises to the cell inner membrane. It catalyses the reaction ATP + H2O + 4 H(+)(in) = ADP + phosphate + 5 H(+)(out). In terms of biological role, produces ATP from ADP in the presence of a proton gradient across the membrane. The alpha chain is a regulatory subunit. In Xylella fastidiosa (strain Temecula1 / ATCC 700964), this protein is ATP synthase subunit alpha.